We begin with the raw amino-acid sequence, 602 residues long: NADH-quinone oxidoreductase subunit C/D (602 aa).

An NADH dehydrogenase I subunit C region spans residues 1-192 (MVNNMTDLTA…DPFELTKAKQ (192 aa)). An NADH dehydrogenase I subunit D region spans residues 216–602 (DFMFLNLGPN…IDFVMSDVDR (387 aa)).

It in the N-terminal section; belongs to the complex I 30 kDa subunit family. The protein in the C-terminal section; belongs to the complex I 49 kDa subunit family. In terms of assembly, NDH-1 is composed of 13 different subunits. Subunits NuoB, CD, E, F, and G constitute the peripheral sector of the complex.

It is found in the cell inner membrane. The enzyme catalyses a quinone + NADH + 5 H(+)(in) = a quinol + NAD(+) + 4 H(+)(out). Its function is as follows. NDH-1 shuttles electrons from NADH, via FMN and iron-sulfur (Fe-S) centers, to quinones in the respiratory chain. The immediate electron acceptor for the enzyme in this species is believed to be ubiquinone. Couples the redox reaction to proton translocation (for every two electrons transferred, four hydrogen ions are translocated across the cytoplasmic membrane), and thus conserves the redox energy in a proton gradient. The chain is NADH-quinone oxidoreductase subunit C/D from Klebsiella pneumoniae subsp. pneumoniae (strain ATCC 700721 / MGH 78578).